Reading from the N-terminus, the 152-residue chain is D-aminoacyl-tRNA deacylase (152 aa).

Residues 142 to 143 carry the Gly-cisPro motif, important for rejection of L-amino acids motif; sequence GP.

The protein belongs to the DTD family. In terms of assembly, homodimer.

It is found in the cytoplasm. The catalysed reaction is glycyl-tRNA(Ala) + H2O = tRNA(Ala) + glycine + H(+). The enzyme catalyses a D-aminoacyl-tRNA + H2O = a tRNA + a D-alpha-amino acid + H(+). An aminoacyl-tRNA editing enzyme that deacylates mischarged D-aminoacyl-tRNAs. Also deacylates mischarged glycyl-tRNA(Ala), protecting cells against glycine mischarging by AlaRS. Acts via tRNA-based rather than protein-based catalysis; rejects L-amino acids rather than detecting D-amino acids in the active site. By recycling D-aminoacyl-tRNA to D-amino acids and free tRNA molecules, this enzyme counteracts the toxicity associated with the formation of D-aminoacyl-tRNA entities in vivo and helps enforce protein L-homochirality. The polypeptide is D-aminoacyl-tRNA deacylase (Burkholderia cenocepacia (strain ATCC BAA-245 / DSM 16553 / LMG 16656 / NCTC 13227 / J2315 / CF5610) (Burkholderia cepacia (strain J2315))).